We begin with the raw amino-acid sequence, 161 residues long: Large ribosomal subunit protein uL15 (161 aa).

Positions 1 to 10 (MKLNELRDNP) are enriched in basic and acidic residues. Residues 1 to 42 (MKLNELRDNPGARPKSKRLGRGIGSGKGKTSGKGVKGQKARE) are disordered. A compositionally biased stretch (gly residues) spans 21 to 35 (RGIGSGKGKTSGKGV).

The protein belongs to the universal ribosomal protein uL15 family. Part of the 50S ribosomal subunit.

Binds to the 23S rRNA. In Acidiphilium cryptum (strain JF-5), this protein is Large ribosomal subunit protein uL15.